The following is a 97-amino-acid chain: Scorpine-like peptide Ev37 (97 aa).

An N-terminal signal peptide occupies residues Met1–Cys19. A BetaSPN-type CS-alpha/beta domain is found at Gln55–Tyr95. Disulfide bonds link Cys58–Cys82, Cys68–Cys87, and Cys72–Cys89.

It belongs to the long chain scorpion toxin family. Class 3 subfamily. In terms of tissue distribution, expressed by the venom gland.

The protein localises to the secreted. Its function is as follows. Selectively inhibits Kv1.3/KCNA3 channel (IC(50)=0.95 uM). Both N-terminal and C-terminal domains are likely involved in the interaction with Kv1.3/KCNA3, since neither its N-terminal domain (1-36) nor its C-terminal domain (37-78) block Kv1.3/KCNA3 channel. This Euscorpiops validus (Scorpion) protein is Scorpine-like peptide Ev37.